The chain runs to 280 residues: Beta-lactamase OXA-58 (280 aa).

A signal peptide spans 1 to 18 (MKLLKILSLVCLSISIGA). Residue Cys-19 is the site of N-palmitoyl cysteine attachment. Cys-19 is lipidated: S-diacylglycerol cysteine. Ser-83 (acyl-ester intermediate) is an active-site residue. A beta-lactam is bound by residues Ser-83, Lys-86, Ser-130, Ser-221, Trp-223, and Arg-263. At Lys-86 the chain carries N6-carboxylysine.

Belongs to the class-D beta-lactamase family. In terms of assembly, monomer. Dimer. Post-translationally, carboxylated on the epsilon-amino group of a lysine, with the resulting carbamate functional group serving as a general base. Probably N-carboxylated at Lys-86 at neutral pH in vivo and undergoes complete N-decarboxylation, at pH 4.1, in vitro. N-carboxylation at Lys-86 probably increases catalytic activity under physiological conditions.

The protein resides in the cell membrane. The catalysed reaction is a beta-lactam + H2O = a substituted beta-amino acid. With respect to regulation, activated approximately 3-fold by the presence of 0.1M NaHCO3. Class D beta-lactamase which confers resistance to the beta-lactam antibiotics, including penicillins and oxacillin, and moderate resistance to carbapenems such as imipenem; in the DH10B strain of E.coli. Acts via hydrolysis of the beta-lactam ring. Has benzylpenicillin-, oxacillin-, cephalothin- and imipenem-hydrolyzing activities. The chain is Beta-lactamase OXA-58 from Acinetobacter baumannii.